The chain runs to 445 residues: Phosphoglucosamine mutase (445 aa).

The active-site Phosphoserine intermediate is the serine 102. 4 residues coordinate Mg(2+): serine 102, aspartate 241, aspartate 243, and aspartate 245. Position 102 is a phosphoserine (serine 102).

Belongs to the phosphohexose mutase family. Requires Mg(2+) as cofactor. Activated by phosphorylation.

The catalysed reaction is alpha-D-glucosamine 1-phosphate = D-glucosamine 6-phosphate. Functionally, catalyzes the conversion of glucosamine-6-phosphate to glucosamine-1-phosphate. The protein is Phosphoglucosamine mutase of Escherichia coli O139:H28 (strain E24377A / ETEC).